The following is a 147-amino-acid chain: Cyanate hydratase (147 aa).

Catalysis depends on residues arginine 88, glutamate 91, and serine 114.

It belongs to the cyanase family.

The catalysed reaction is cyanate + hydrogencarbonate + 3 H(+) = NH4(+) + 2 CO2. In terms of biological role, catalyzes the reaction of cyanate with bicarbonate to produce ammonia and carbon dioxide. The chain is Cyanate hydratase from Thiobacillus denitrificans (strain ATCC 25259 / T1).